The primary structure comprises 196 residues: MKATLINYGVGNLFSIKAGLERVGFNVKISFLPEGDEDVIVLPGVGAFSAVSSYLNSMKDKFNELRERGVKFLGVCLGMQVMFDEGTEGGLSKGLGWFKGKVDKIHSNVKLPHIGWDKLFVNKDSCNLTEGLDGKYVYYVHSYVAYTNDYVAYSEYGIKYPAIVCNDFAVGTQFHPEKSSVTGKIFLRNFYSWVKR.

One can recognise a Glutamine amidotransferase type-1 domain in the interval 2–196 (KATLINYGVG…LRNFYSWVKR (195 aa)). The Nucleophile role is filled by Cys-76. Active-site residues include His-175 and Glu-177.

In terms of assembly, heterodimer of HisH and HisF.

Its subcellular location is the cytoplasm. The enzyme catalyses 5-[(5-phospho-1-deoxy-D-ribulos-1-ylimino)methylamino]-1-(5-phospho-beta-D-ribosyl)imidazole-4-carboxamide + L-glutamine = D-erythro-1-(imidazol-4-yl)glycerol 3-phosphate + 5-amino-1-(5-phospho-beta-D-ribosyl)imidazole-4-carboxamide + L-glutamate + H(+). The catalysed reaction is L-glutamine + H2O = L-glutamate + NH4(+). The protein operates within amino-acid biosynthesis; L-histidine biosynthesis; L-histidine from 5-phospho-alpha-D-ribose 1-diphosphate: step 5/9. Functionally, IGPS catalyzes the conversion of PRFAR and glutamine to IGP, AICAR and glutamate. The HisH subunit catalyzes the hydrolysis of glutamine to glutamate and ammonia as part of the synthesis of IGP and AICAR. The resulting ammonia molecule is channeled to the active site of HisF. The sequence is that of Imidazole glycerol phosphate synthase subunit HisH from Sulfurisphaera tokodaii (strain DSM 16993 / JCM 10545 / NBRC 100140 / 7) (Sulfolobus tokodaii).